A 174-amino-acid polypeptide reads, in one-letter code: Cytochrome c-type biogenesis protein CcmE (174 aa).

Residues 1 to 8 (MNPRRKSR) lie on the Cytoplasmic side of the membrane. A helical; Signal-anchor for type II membrane protein membrane pass occupies residues 9–29 (LSVVLFILLGISVASALVLYA). Topologically, residues 30–174 (LRQNIDLFYT…QEKQFKEGNQ (145 aa)) are periplasmic. Heme is bound by residues histidine 131 and tyrosine 135. Positions 149–174 (KPMGISDLKNESDRDRQEKQFKEGNQ) are disordered. The span at 156-174 (LKNESDRDRQEKQFKEGNQ) shows a compositional bias: basic and acidic residues.

Belongs to the CcmE/CycJ family.

The protein resides in the cell inner membrane. Its function is as follows. Heme chaperone required for the biogenesis of c-type cytochromes. Transiently binds heme delivered by CcmC and transfers the heme to apo-cytochromes in a process facilitated by CcmF and CcmH. The chain is Cytochrome c-type biogenesis protein CcmE from Histophilus somni (strain 2336) (Haemophilus somnus).